The sequence spans 873 residues: Valine--tRNA ligase (873 aa).

The 'HIGH' region motif lies at 46 to 56 (PNVTGKLHIGH). The 'KMSKS' region motif lies at 525–529 (KMSKS). Position 528 (lysine 528) interacts with ATP. A coiled-coil region spans residues 804–873 (NDDFIDKEKM…ELIQDKLNKM (70 aa)).

This sequence belongs to the class-I aminoacyl-tRNA synthetase family. ValS type 1 subfamily. In terms of assembly, monomer.

Its subcellular location is the cytoplasm. It catalyses the reaction tRNA(Val) + L-valine + ATP = L-valyl-tRNA(Val) + AMP + diphosphate. In terms of biological role, catalyzes the attachment of valine to tRNA(Val). As ValRS can inadvertently accommodate and process structurally similar amino acids such as threonine, to avoid such errors, it has a 'posttransfer' editing activity that hydrolyzes mischarged Thr-tRNA(Val) in a tRNA-dependent manner. The protein is Valine--tRNA ligase of Mesoplasma florum (strain ATCC 33453 / NBRC 100688 / NCTC 11704 / L1) (Acholeplasma florum).